A 662-amino-acid polypeptide reads, in one-letter code: Calcium-dependent protease (662 aa).

The Peptidase S8 domain occupies 196–529 (QWHLKETTIG…YGRINALKAV (334 aa)). Residues Asp-233, His-270, and Ser-466 each act as charge relay system in the active site. Residues 535–662 (AQPEPVSIFT…IRSLTIELGF (128 aa)) form the P/Homo B domain.

The protein belongs to the peptidase S8 family.

The protein localises to the cytoplasm. Its function is as follows. Degrades phycobiliproteins in vitro. Has a substrate specificity similar to that of trypsin. The chain is Calcium-dependent protease (prcA) from Nostoc sp. (strain PCC 7120 / SAG 25.82 / UTEX 2576).